The primary structure comprises 340 residues: Methionine import ATP-binding protein MetN (340 aa).

Residues 6–245 (IEFEGITKVF…PQTNVAKRFV (240 aa)) form the ABC transporter domain. 42–49 (GYSGAGKS) provides a ligand contact to ATP.

The protein belongs to the ABC transporter superfamily. Methionine importer (TC 3.A.1.24) family. In terms of assembly, the complex is composed of two ATP-binding proteins (MetN), two transmembrane proteins (MetI) and a solute-binding protein (MetQ).

It is found in the cell membrane. The enzyme catalyses L-methionine(out) + ATP + H2O = L-methionine(in) + ADP + phosphate + H(+). It carries out the reaction D-methionine(out) + ATP + H2O = D-methionine(in) + ADP + phosphate + H(+). Part of the ABC transporter complex MetNIQ involved in methionine import. Responsible for energy coupling to the transport system. The sequence is that of Methionine import ATP-binding protein MetN from Corynebacterium diphtheriae (strain ATCC 700971 / NCTC 13129 / Biotype gravis).